Reading from the N-terminus, the 949-residue chain is MQNQGNKVLSAAMLDSADRYWLRLCDVWPEAKTALTAMQQQELTAVFGLSDYMGEQLCRHPEWIVQLFDGLLDDVVRSEFDAQLHSLIADLTQEELVKSALRRYRNLQMVRLAWRDFLNYTPVEESLLDLSALAEALVIAGRDWLYQEMCQQYGTPTSAEGNPQPLLILGMGKLGGRELNFSSDIDLIFTFPEHGETVGGRRTQANQQFFIRMGQRLVNLLDQVTVDGFVFRVDMRLRPYGESGPLVVSFSGLEDYYQEQGRDWERYAMVKARVLGPWSGYCDELHDLLRPFVYRRYIDFSAIESLRKMKQLIAQEVRRRQLTDNIKLGAGGIREVEFVVQSFQLIRGGREPALRQQSLFGAIDTLYSLGQLEYLAVDELKHSYIILRRVENLLQAIDDKQTQTLPNNELDWQRLCYPLDMADEVELRQKINQAMVTIHGHFNATVGGTDSHEHNDHWTALFWNVQQDEHANALLQEQQVDDAELWQLLSEWRQTVSKRSIGPRGRETLDKLMPKLLEELVTQTKPSQAFKPVAKVLDKILTRTTYLELLCENPGARQQLVSLCCASPWIARELANFPMLLDELIDPSQLYDITSIDDYPSELRQYLLRVPEDDMEQQMEALRQFKLSQQLKIAAADVTGVLPVMQVSDHLTFLAEAIIEQVVLQAWHQVASRHGIPAETSPSNMGFAVIGYGKLGGIELGYGSDLDLVFLHGHTGSGTTDGKRPIDNGHFYLKLAQRIVHLFATRTTSGELYEVDMRLRPSGASGLLVSEIEHFGAYLQQEAWTWEHQALVRSRFVFGDYSLAGRFSDLRAQVLKIERDKQVLAKAVKDMRIKMREHLLQVEPGQFDLKQSAGGIADIEFIAQYLVLANAHQYHELTIWSDNVRIFEVLAELELLPIMQAQHLTQTYCWLRDENHELTLQQLPGKLPIQSVLQKTDSVIEIYNEILAI.

An adenylyl removase region spans residues 1–450 (MQNQGNKVLS…HFNATVGGTD (450 aa)). Residues 455-949 (NDHWTALFWN…IEIYNEILAI (495 aa)) form an adenylyl transferase region.

This sequence belongs to the GlnE family. It depends on Mg(2+) as a cofactor.

The enzyme catalyses [glutamine synthetase]-O(4)-(5'-adenylyl)-L-tyrosine + phosphate = [glutamine synthetase]-L-tyrosine + ADP. It carries out the reaction [glutamine synthetase]-L-tyrosine + ATP = [glutamine synthetase]-O(4)-(5'-adenylyl)-L-tyrosine + diphosphate. Its function is as follows. Involved in the regulation of glutamine synthetase GlnA, a key enzyme in the process to assimilate ammonia. When cellular nitrogen levels are high, the C-terminal adenylyl transferase (AT) inactivates GlnA by covalent transfer of an adenylyl group from ATP to specific tyrosine residue of GlnA, thus reducing its activity. Conversely, when nitrogen levels are low, the N-terminal adenylyl removase (AR) activates GlnA by removing the adenylyl group by phosphorolysis, increasing its activity. The regulatory region of GlnE binds the signal transduction protein PII (GlnB) which indicates the nitrogen status of the cell. The chain is Bifunctional glutamine synthetase adenylyltransferase/adenylyl-removing enzyme from Shewanella frigidimarina (strain NCIMB 400).